Reading from the N-terminus, the 405-residue chain is NADH-quinone oxidoreductase subunit D (405 aa).

Belongs to the complex I 49 kDa subunit family. NDH-1 is composed of 14 different subunits. Subunits NuoB, C, D, E, F, and G constitute the peripheral sector of the complex.

Its subcellular location is the cell inner membrane. The enzyme catalyses a quinone + NADH + 5 H(+)(in) = a quinol + NAD(+) + 4 H(+)(out). Its function is as follows. NDH-1 shuttles electrons from NADH, via FMN and iron-sulfur (Fe-S) centers, to quinones in the respiratory chain. The immediate electron acceptor for the enzyme in this species is believed to be ubiquinone. Couples the redox reaction to proton translocation (for every two electrons transferred, four hydrogen ions are translocated across the cytoplasmic membrane), and thus conserves the redox energy in a proton gradient. The polypeptide is NADH-quinone oxidoreductase subunit D (Leptospira borgpetersenii serovar Hardjo-bovis (strain L550)).